Reading from the N-terminus, the 603-residue chain is MRVVAGILYIVVMAICGLGIQGGTLQDYPSVYFQDSTLQQDFPTIFFNILAGETYGDFIADLREIVTRTADTKNGSIPVLLNPAHPVPVRERFVKVHLTGRNGKTVILALDVTNLYVAAFSANNVAYFFRDFSALERENLFSGMLTIRLSFTSNYVSLEHKAGVGRENISLGPTPLDEACTKSLWSGTTVTEASIAKALLVVIQMVSEAARFRHIEERVRRSFTAADHDQLTFRPDGLMLSMENEWPSMSLEVQRSIEGGIFIGVVQLQDESFQPLRVDNFNTLSRYTMVALLLFRCGHPRATAGTSSTTPAAAQIIRMPVDVLAGEEYYDEETCTVGEPTRRISGLDGLCMDVRNESNNDGIPIQLWPCGAQRNQQWTFHTDGTIQSMGKCMTSNGYHPGDYVMIFNCSTAPVPDATKWVVSIDGSITNPHSGLVLTAPQAAQTTILLVVRNTHSAKQGRSVGDDVEPIVTYIVGFKYMCLQGNNENNTRVWLEDCAVDRPQQWWALYSDGTIRVDSDRSLCVTSDGHSSRDAIIILTCDGGINQRLVFNTDGTILNPNAQLVMDVRQSNVALRQIILYQPTGNPNQQWMTMITRTRPSLTS.

A signal peptide spans 1-39 (MRVVAGILYIVVMAICGLGIQGGTLQDYPSVYFQDSTLQ). N-linked (GlcNAc...) asparagine glycosylation is found at Asn-74 and Asn-168. Glu-208 is an active-site residue. Cystine bridges form between Cys-297/Cys-335, Cys-351/Cys-370, and Cys-392/Cys-409. Ricin B-type lectin domains lie at 338 to 466 (GEPT…VGDD) and 467 to 593 (VEPI…WMTM). Residues 348–388 (DGLCMDVRNESNNDGIPIQLWPCGAQRNQQWTFHTDGTIQS) form a 1-alpha repeat. 2 N-linked (GlcNAc...) asparagine glycosylation sites follow: Asn-356 and Asn-408. The 1-beta repeat unit spans residues 389–430 (MGKCMTSNGYHPGDYVMIFNCSTAPVPDATKWVVSIDGSITN). The stretch at 433 to 466 (SGLVLTAPQAAQTTILLVVRNTHSAKQGRSVGDD) is one 1-gamma repeat. A 2-alpha repeat occupies 478-516 (KYMCLQGNNENNTRVWLEDCAVDRPQQWWALYSDGTIRV). 2 disulfide bridges follow: Cys-481/Cys-497 and Cys-523/Cys-540. Residue Asn-488 is glycosylated (N-linked (GlcNAc...) asparagine). One copy of the 2-beta repeat lies at 520–558 (RSLCVTSDGHSSRDAIIILTCDGGINQRLVFNTDGTILN). One copy of the 2-gamma repeat lies at 561 to 597 (AQLVMDVRQSNVALRQIILYQPTGNPNQQWMTMITRT).

This sequence belongs to the ribosome-inactivating protein family. Type 2 RIP subfamily. As to quaternary structure, tetramer of four pairs of disulfide bound A-B chains. In terms of processing, the precursor is processed in two chains, A and B, that are linked by a disulfide bond. Glycosylated. Expressed in rhizome and more abundantly in leaves (at protein level).

It carries out the reaction Endohydrolysis of the N-glycosidic bond at one specific adenosine on the 28S rRNA.. Strongly inhibited by asialofetuin and asialomucin. Functionally, galNAc-specific agglutinin. Behaves as a type-2 ribosome-inactivating protein. Inhibits mammalian ribosomes. The A chain is responsible for inhibiting protein synthesis through the catalytic inactivation of 60S ribosomal subunits by removing adenine from position 4,324 of 28S rRNA. The B chain binds to cell receptors and probably facilitates the entry into the cell of the A chain; B chains are also responsible for cell agglutination (lectin activity). Involved in plant defense against insects. Has very low cytotoxic activity against the human tumor cell lines CEM and Molt4. The protein is Ribosome-inactivating protein PMRIPt of Polygonatum multiflorum (Solomon's seal).